The following is a 247-amino-acid chain: uncharacterized protein (247 aa).

One can recognise an N-acetyltransferase domain in the interval 102 to 247; that stretch reads RSIMSRTNDN…ISEHHYRIKR (146 aa).

The protein belongs to the acetyltransferase family.

This is an uncharacterized protein from Bacillus subtilis (strain 168).